Reading from the N-terminus, the 195-residue chain is Cysteine/O-acetylserine efflux protein (195 aa).

At 1–7 the chain is on the periplasmic side; it reads MTPTLLS. Residues 8–28 traverse the membrane as a helical segment; sequence AFWTYTLITAMTPGPNNILAL. The Cytoplasmic segment spans residues 29–46; it reads SSATSHGFRQSTRVLAGM. A helical membrane pass occupies residues 47-67; it reads SLGFLIVMLLCAGISFSLAVI. The Periplasmic portion of the chain corresponds to 68–69; it reads DP. Residues 70-90 traverse the membrane as a helical segment; sequence AAVHLLSWAGAAYIVWLAWKI. Residues 91-104 lie on the Cytoplasmic side of the membrane; sequence ATSPTKEDGLQAKP. Residues 105-125 form a helical membrane-spanning segment; the sequence is ISFWASFALQFVNVKIILYGV. The Periplasmic portion of the chain corresponds to 126-141; that stretch reads TALSTFVLPQTQALSW. A helical membrane pass occupies residues 142-162; that stretch reads VVGVSVLLAMIGTFGNVCWAL. Residues 163-176 are Cytoplasmic-facing; it reads AGHLFQRLFRQYGR. The chain crosses the membrane as a helical span at residues 177–194; that stretch reads QLNIVLALLLVYCAVRIF. A topological domain (periplasmic) is located at residue Y195.

Belongs to the Rht family.

It is found in the cell inner membrane. It catalyses the reaction O-acetyl-L-serine(in) = O-acetyl-L-serine(out). It carries out the reaction L-cysteine(in) = L-cysteine(out). Its function is as follows. Exporter of O-acetylserine (OAS) and cysteine. The protein is Cysteine/O-acetylserine efflux protein (eamB) of Escherichia coli O9:H4 (strain HS).